Here is a 356-residue protein sequence, read N- to C-terminus: Manganese-dependent ADP-ribose/CDP-alcohol diphosphatase (356 aa).

Residues Asp-32, Gln-34, Asp-81, Asn-117, His-253, His-290, and His-292 each coordinate Zn(2+).

The protein belongs to the ADPRibase-Mn family. As to quaternary structure, monomer. Mg(2+) serves as cofactor.

The enzyme catalyses CDP-choline + H2O = phosphocholine + CMP + 2 H(+). It carries out the reaction ADP-D-ribose + H2O = D-ribose 5-phosphate + AMP + 2 H(+). The catalysed reaction is CDP-glycerol + H2O = sn-glycerol 3-phosphate + CMP + 2 H(+). Hydrolyzes ADP-ribose, IDP-ribose, CDP-glycerol, CDP-choline and CDP-ethanolamine, but not other non-reducing ADP-sugars or CDP-glucose. The sequence is that of Manganese-dependent ADP-ribose/CDP-alcohol diphosphatase (adprm) from Xenopus laevis (African clawed frog).